The following is a 580-amino-acid chain: MFS-type transporter thnB (580 aa).

The disordered stretch occupies residues 1–33 (MSGDYSATRKSENVDTSTTASQEDSSLAPEQPE). The segment covering 14–25 (VDTSTTASQEDS) has biased composition (polar residues). Helical transmembrane passes span 60-80 (LITL…DQTI), 92-112 (FHGL…LGGF), 125-145 (LKIS…ICGV), 157-177 (AIAG…LAFS), 188-208 (STMG…GGAF), 216-236 (WCFY…FLFF), and 259-279 (VGTV…QYAG). A glycan (N-linked (GlcNAc...) asparagine) is linked at Asn-285. A run of 7 helical transmembrane segments spans residues 286 to 306 (SSVV…LAAW), 331 to 351 (IFQF…PIYF), 364 to 384 (VDNL…GAAV), 389 to 409 (MATP…GLLY), 421 to 441 (IGYQ…ALNI), 457 to 477 (SLYF…QAAF), and 529 to 549 (FAVS…MVMI).

It belongs to the major facilitator superfamily.

The protein resides in the membrane. In terms of biological role, MFS-type transporter; part of the gene cluster that produces the tetronate natural products trihazones. The polypeptide is MFS-type transporter thnB (Trichoderma harzianum (Hypocrea lixii)).